Reading from the N-terminus, the 746-residue chain is tRNA (cytosine(34)-C(5))-methyltransferase (746 aa).

Positions 1 to 30 are disordered; the sequence is MGRNQKQNFFAARKRQKRENGPKRTDRQAQ. Basic and acidic residues predominate over residues 18–30; sequence RENGPKRTDRQAQ. S-adenosyl-L-methionine is bound by residues 184-190, Asp216, Asp243, and Asp270; that span reads CAAPGSK. Residue Cys323 is the Nucleophile of the active site. Disordered stretches follow at residues 454–475 and 701–746; these read QPAAEPQVDADGKPIEEKSVPW and SAEA…VATS. The span at 463–472 shows a compositional bias: basic and acidic residues; that stretch reads ADGKPIEEKS. Residues 704-714 show a composition bias toward acidic residues; it reads AEADSSGDGDA. Positions 731–746 are enriched in polar residues; sequence AETTGTPMDTEVVATS.

Belongs to the class I-like SAM-binding methyltransferase superfamily. RsmB/NOP family. TRM4 subfamily. In terms of tissue distribution, ubiquitously expressed during embryonic development. Some enrichment is observed in the proventriculus area of the foregut and in the hindgut.

Its subcellular location is the nucleus. It is found in the nucleolus. It carries out the reaction cytidine(34) in tRNA precursor + S-adenosyl-L-methionine = 5-methylcytidine(34) in tRNA precursor + S-adenosyl-L-homocysteine + H(+). Its function is as follows. RNA methyltransferase that methylates tRNAs. Methylates cytosine to 5-methylcytosine (m5C) at position 34 of intron-containing tRNA(Leu)(CAA) precursors. Required for short-term memory. The protein is tRNA (cytosine(34)-C(5))-methyltransferase of Drosophila melanogaster (Fruit fly).